The sequence spans 96 residues: (4S)-4-hydroxy-5-phosphonooxypentane-2,3-dione isomerase (96 aa).

The 90-residue stretch at 2-91 folds into the ABM domain; the sequence is HVTLVEINVH…MTGPRTKKVF (90 aa).

It belongs to the LsrG family. As to quaternary structure, homodimer.

It localises to the cytoplasm. The catalysed reaction is (2S)-2-hydroxy-3,4-dioxopentyl phosphate = 3-hydroxy-2,4-dioxopentyl phosphate. Involved in the degradation of phospho-AI-2, thereby terminating induction of the lsr operon and closing the AI-2 signaling cycle. Catalyzes the conversion of (4S)-4-hydroxy-5-phosphonooxypentane-2,3-dione (P-DPD) to 3-hydroxy-5-phosphonooxypentane-2,4-dione (P-HPD). The chain is (4S)-4-hydroxy-5-phosphonooxypentane-2,3-dione isomerase from Salmonella choleraesuis (strain SC-B67).